The chain runs to 404 residues: Subtilisin-like protease 3 (404 aa).

The first 20 residues, 1–20, serve as a signal peptide directing secretion; it reads MLFSKSLVALVACFLPLIVS. Positions 21–114 are excised as a propeptide; that stretch reads ATELKLRNAA…VDKDVKVSAY (94 aa). In terms of domain architecture, Inhibitor I9 spans 38–112; that stretch reads SYIVVYKDID…AYVDKDVKVS (75 aa). The Peptidase S8 domain occupies 123–404; that stretch reads PWGLDRISHR…DNLAYNDDGY (282 aa). An N-linked (GlcNAc...) asparagine glycan is attached at asparagine 133. Residues aspartate 158 and histidine 190 each act as charge relay system in the active site. N-linked (GlcNAc...) asparagine glycans are attached at residues asparagine 243, asparagine 251, asparagine 286, asparagine 307, and asparagine 340. The active-site Charge relay system is the serine 347. Asparagine 366 is a glycosylation site (N-linked (GlcNAc...) asparagine).

Belongs to the peptidase S8 family.

Its subcellular location is the secreted. Functionally, secreted subtilisin-like serine endopeptidase. Mediates the degradation of collagen, the major structural protein in the mammalian host. Degrades the nonhelical regions of collagen that function in the cross-linking of the helical components. May function as virulence factor involved in epidermal wing necrosis observed in white nose syndrome (WNS) in bats. This Pseudogymnoascus destructans (strain ATCC MYA-4855 / 20631-21) (Bat white-nose syndrome fungus) protein is Subtilisin-like protease 3.